The sequence spans 167 residues: Small ribosomal subunit protein uS5 (167 aa).

The region spanning 12 to 75 (LQEKLIAVNR…EKARRNMVTV (64 aa)) is the S5 DRBM domain.

The protein belongs to the universal ribosomal protein uS5 family. In terms of assembly, part of the 30S ribosomal subunit. Contacts proteins S4 and S8.

Its function is as follows. With S4 and S12 plays an important role in translational accuracy. Functionally, located at the back of the 30S subunit body where it stabilizes the conformation of the head with respect to the body. The sequence is that of Small ribosomal subunit protein uS5 from Shewanella oneidensis (strain ATCC 700550 / JCM 31522 / CIP 106686 / LMG 19005 / NCIMB 14063 / MR-1).